We begin with the raw amino-acid sequence, 375 residues long: Chaperone protein DnaJ (375 aa).

The 64-residue stretch at 5–68 (DYYEILGVSK…KKRAQYDQFG (64 aa)) folds into the J domain. Residues 135 to 217 (GISKNINYDR…CYGKKVINER (83 aa)) form a CR-type zinc finger. Positions 148, 151, 165, 168, 191, 194, 205, and 208 each coordinate Zn(2+). CXXCXGXG motif repeat units follow at residues 148 to 155 (CHKCQGTG), 165 to 172 (CTKCHGRG), 191 to 198 (CHECEGTG), and 205 to 212 (CEQCYGKK).

Belongs to the DnaJ family. In terms of assembly, homodimer. Requires Zn(2+) as cofactor.

It is found in the cytoplasm. In terms of biological role, participates actively in the response to hyperosmotic and heat shock by preventing the aggregation of stress-denatured proteins and by disaggregating proteins, also in an autonomous, DnaK-independent fashion. Unfolded proteins bind initially to DnaJ; upon interaction with the DnaJ-bound protein, DnaK hydrolyzes its bound ATP, resulting in the formation of a stable complex. GrpE releases ADP from DnaK; ATP binding to DnaK triggers the release of the substrate protein, thus completing the reaction cycle. Several rounds of ATP-dependent interactions between DnaJ, DnaK and GrpE are required for fully efficient folding. Also involved, together with DnaK and GrpE, in the DNA replication of plasmids through activation of initiation proteins. This is Chaperone protein DnaJ from Ureaplasma parvum serovar 3 (strain ATCC 700970).